The following is a 684-amino-acid chain: MSKIPGSNLEFVREEDFVEYYIFPKIPDNVQDEGALRKLMLQIRNEISAIVREKSLERSYLWHKDEFQLQVRLGGAEERLLNEETNPEEEAELGDLPPHFHGVTHYGDNISDEWFVVYLLTEITRARGDCIARVSDSDGEFLLIEAADALPDWASPETCEQRVYLVGGHLQLLQNSAASSQDKPLTMAMAVQRIRMNPTLYRCSQEIQSCIDARLKEYQIAQPHFSIHRQVLELPHSAAQLLKQKPRLLSSAVRAFCERDSLDIKALRTMRYFPPEATRVRTNVRFTRCLYAMLSHQQYLPEKRLGWHLTDPVSEPERYKEQLLGLKLASGLEILATQAKRVEGQQLEDLPAWRSYLRSLLSKGYFRDNIEGSAEYQELLNKAKVYFRGNQERFRTASRAGAEILDLLLHPAEAASEELRDEENNLQPSDSDEWLNISAEDLDSMLQDRYGPKKLYKPNGQMNAEEFTKQLAEFLDRQSNYEGIEHRGLEEPELDSDDDEPPPQANGSTGLTAKVKKNPSMRKACQRNSVIQPEEPDSTHVRNFLDFVIPEDNWDSTSEMSDYADEDDMESNLNALSGGGSVFPLDRQIQSYMEQMDRELAQTSVGKSFHGKKKTAPQADEDDFDDIEDFEPININVNTLRNMMDSYQSQVGGAGPVSNLFSAMGVGMSAVEDKEQKDISESAV.

Acidic residues predominate over residues 491 to 501; sequence EPELDSDDDEP. Disordered regions lie at residues 491–528 and 603–624; these read EPEL…CQRN and TSVG…EDDF.

This sequence belongs to the ECD family. As to expression, expressed in the ecdysone-producing larval ring gland, nervous system, imaginal disks and gonads.

It is found in the cytoplasm. In terms of biological role, required in both the follicle cells and the germline for oocyte development. In Drosophila melanogaster (Fruit fly), this protein is Protein ecdysoneless.